Consider the following 265-residue polypeptide: Putative 2-amino-3,7-dideoxy-D-threo-hept-6-ulosonate synthase 2 (265 aa).

Asp-27 serves as the catalytic Proton acceptor. 1-deoxy-D-threo-hexo-2,5-diulose 6-phosphate-binding positions include 27 to 31 (DHGVS) and 147 to 149 (YPR). Tyr-147 serves as the catalytic Proton donor. The Schiff-base intermediate with substrate role is filled by Lys-177. Residues 202–203 (GG) and 230–231 (GR) contribute to the 1-deoxy-D-threo-hexo-2,5-diulose 6-phosphate site.

It belongs to the DeoC/FbaB aldolase family. ADHS subfamily. Homodecamer.

It carries out the reaction 1-deoxy-D-threo-hexo-2,5-diulose 6-phosphate + L-aspartate 4-semialdehyde = 2,3-dioxopropyl phosphate + 2-amino-2,3,7-trideoxy-D-lyxo-hept-6-ulosonate. Functionally, catalyzes a transaldol reaction between 6-deoxy-5-ketofructose 1-phosphate (DKFP) and L-aspartate semialdehyde (ASA) with an elimination of hydroxypyruvaldehyde phosphate to yield 2-amino-3,7-dideoxy-D-threo-hept-6-ulosonate (ADH). Plays a key role in an alternative pathway of the biosynthesis of 3-dehydroquinate (DHQ), which is involved in the canonical pathway for the biosynthesis of aromatic amino acids. The chain is Putative 2-amino-3,7-dideoxy-D-threo-hept-6-ulosonate synthase 2 from Archaeoglobus fulgidus (strain ATCC 49558 / DSM 4304 / JCM 9628 / NBRC 100126 / VC-16).